A 91-amino-acid chain; its full sequence is Small ribosomal subunit protein bS20 (91 aa).

The tract at residues 1–28 (MANTASAEKRNRQAQKRRARNVQVRTGV) is disordered.

The protein belongs to the bacterial ribosomal protein bS20 family.

Functionally, binds directly to 16S ribosomal RNA. The sequence is that of Small ribosomal subunit protein bS20 from Anaeromyxobacter dehalogenans (strain 2CP-1 / ATCC BAA-258).